Reading from the N-terminus, the 345-residue chain is Dihydroorotate dehydrogenase (quinone) (345 aa).

Residues 65–69 (AGLDK) and T89 contribute to the FMN site. Substrate is bound at residue K69. A substrate-binding site is contributed by 114–118 (NRMGF). The FMN site is built by N142 and N175. N175 provides a ligand contact to substrate. S178 (nucleophile) is an active-site residue. N180 is a substrate binding site. Residues K220 and T248 each contribute to the FMN site. 249-250 (NT) provides a ligand contact to substrate. Residues G271, G300, and 321–322 (YT) contribute to the FMN site.

Belongs to the dihydroorotate dehydrogenase family. Type 2 subfamily. Monomer. FMN is required as a cofactor.

The protein localises to the cell membrane. It carries out the reaction (S)-dihydroorotate + a quinone = orotate + a quinol. It functions in the pathway pyrimidine metabolism; UMP biosynthesis via de novo pathway; orotate from (S)-dihydroorotate (quinone route): step 1/1. In terms of biological role, catalyzes the conversion of dihydroorotate to orotate with quinone as electron acceptor. This Burkholderia cenocepacia (strain ATCC BAA-245 / DSM 16553 / LMG 16656 / NCTC 13227 / J2315 / CF5610) (Burkholderia cepacia (strain J2315)) protein is Dihydroorotate dehydrogenase (quinone).